A 376-amino-acid polypeptide reads, in one-letter code: Deoxyguanosinetriphosphate triphosphohydrolase-like protein (376 aa).

The 137-residue stretch at 62-198 (RLTHSLEVSA…AALADDISYI (137 aa)) folds into the HD domain.

The protein belongs to the dGTPase family. Type 2 subfamily.

This Rickettsia canadensis (strain McKiel) protein is Deoxyguanosinetriphosphate triphosphohydrolase-like protein.